The sequence spans 487 residues: Mu-like prophage FluMu tail sheath protein (487 aa).

It belongs to the myoviridae tail sheath protein family.

Its function is as follows. Major component of the tail. The polypeptide is Mu-like prophage FluMu tail sheath protein (Haemophilus influenzae (strain ATCC 51907 / DSM 11121 / KW20 / Rd)).